The sequence spans 182 residues: Adenine phosphoribosyltransferase (182 aa).

Belongs to the purine/pyrimidine phosphoribosyltransferase family. As to quaternary structure, homodimer.

It localises to the cytoplasm. It carries out the reaction AMP + diphosphate = 5-phospho-alpha-D-ribose 1-diphosphate + adenine. The protein operates within purine metabolism; AMP biosynthesis via salvage pathway; AMP from adenine: step 1/1. Catalyzes a salvage reaction resulting in the formation of AMP, that is energically less costly than de novo synthesis. This chain is Adenine phosphoribosyltransferase, found in Campylobacter concisus (strain 13826).